The chain runs to 145 residues: MIALIQRVSSASVTVEGKVIGEIDKGLLILLGVEQGDDEQKATRLCERVLGYRIFGDDDGKMNLNVRQAGGNVLVVSQFTLVADTQRGMRPGFSRGAHPSEADRLYQYFVGQCREQGVHTETGQFAADMKVALVNDGPVTFWLQT.

The short motif at 137-138 (GP) is the Gly-cisPro motif, important for rejection of L-amino acids element.

Belongs to the DTD family. Homodimer.

The protein resides in the cytoplasm. The enzyme catalyses glycyl-tRNA(Ala) + H2O = tRNA(Ala) + glycine + H(+). It catalyses the reaction a D-aminoacyl-tRNA + H2O = a tRNA + a D-alpha-amino acid + H(+). An aminoacyl-tRNA editing enzyme that deacylates mischarged D-aminoacyl-tRNAs. Also deacylates mischarged glycyl-tRNA(Ala), protecting cells against glycine mischarging by AlaRS. Acts via tRNA-based rather than protein-based catalysis; rejects L-amino acids rather than detecting D-amino acids in the active site. By recycling D-aminoacyl-tRNA to D-amino acids and free tRNA molecules, this enzyme counteracts the toxicity associated with the formation of D-aminoacyl-tRNA entities in vivo and helps enforce protein L-homochirality. In Pectobacterium carotovorum subsp. carotovorum (strain PC1), this protein is D-aminoacyl-tRNA deacylase.